Here is a 316-residue protein sequence, read N- to C-terminus: Probable cell division protein WhiA (316 aa).

The segment at residues 275 to 309 (TLKELGEMVSGGKISKSGINHRLRKIDEIAEKLRA) is a DNA-binding region (H-T-H motif).

It belongs to the WhiA family.

Its function is as follows. Involved in cell division and chromosome segregation. In Bacillus cytotoxicus (strain DSM 22905 / CIP 110041 / 391-98 / NVH 391-98), this protein is Probable cell division protein WhiA.